A 609-amino-acid chain; its full sequence is UvrABC system protein C (609 aa).

The GIY-YIG domain occupies 16 to 94 (SSAGVYRMYD…IKQYMPKYNV (79 aa)). In terms of domain architecture, UVR spans 203–238 (KQVISELVAKMEEAAEQQAYEQAARFRDQIMALRRV).

Belongs to the UvrC family. As to quaternary structure, interacts with UvrB in an incision complex.

It is found in the cytoplasm. Its function is as follows. The UvrABC repair system catalyzes the recognition and processing of DNA lesions. UvrC both incises the 5' and 3' sides of the lesion. The N-terminal half is responsible for the 3' incision and the C-terminal half is responsible for the 5' incision. This is UvrABC system protein C from Shewanella oneidensis (strain ATCC 700550 / JCM 31522 / CIP 106686 / LMG 19005 / NCIMB 14063 / MR-1).